The primary structure comprises 101 residues: Putative membrane protein insertion efficiency factor (101 aa).

The protein belongs to the UPF0161 family.

The protein resides in the cell membrane. Its function is as follows. Could be involved in insertion of integral membrane proteins into the membrane. The chain is Putative membrane protein insertion efficiency factor from Lacticaseibacillus casei (strain BL23) (Lactobacillus casei).